A 235-amino-acid chain; its full sequence is Fibrillarin-like rRNA/tRNA 2'-O-methyltransferase (235 aa).

S-adenosyl-L-methionine is bound by residues 91 to 92, 110 to 111, 137 to 138, and 157 to 160; these read TT, EF, DA, and DVAQ.

The protein belongs to the methyltransferase superfamily. Fibrillarin family. As to quaternary structure, interacts with nop5. Component of box C/D small ribonucleoprotein (sRNP) particles that contain rpl7ae, FlpA and nop5, plus a guide RNA.

In terms of biological role, involved in pre-rRNA and tRNA processing. Utilizes the methyl donor S-adenosyl-L-methionine to catalyze the site-specific 2'-hydroxyl methylation of ribose moieties in rRNA and tRNA. Site specificity is provided by a guide RNA that base pairs with the substrate. Methylation occurs at a characteristic distance from the sequence involved in base pairing with the guide RNA. The chain is Fibrillarin-like rRNA/tRNA 2'-O-methyltransferase from Pyrobaculum islandicum (strain DSM 4184 / JCM 9189 / GEO3).